Here is a 703-residue protein sequence, read N- to C-terminus: Hyperosmolality-gated Ca2+ permeable channel 2.3 (703 aa).

Over 1-3 (MLL) the chain is Extracellular. Residues 4–26 (SALLTSVGINLGLCFLFFTLYSI) form a helical membrane-spanning segment. Residues 27–81 (LRKQPSNVTVYGPRLVKKDGKSQQSNEFNLERLLPTAGWVKRALEPTNDEILSNL) are Cytoplasmic-facing. Residues 82–115 (GLDALVFIRVFVFSIRVFSFASVVGIFILLPVNY) form a helical membrane-spanning segment. The Extracellular segment spans residues 116 to 143 (MGTEFEEFFDLPKKSMDNFSISNVNDGS). Residues 144-165 (NKLWIHFCAIYIFTAVVCSLLY) traverse the membrane as a helical segment. Topologically, residues 166 to 355 (YEHKYILTKR…TASFVRRWIS (190 aa)) are cytoplasmic. The stretch at 228–300 (RTDKLKVLMN…LKQSLLAGEE (73 aa)) forms a coiled coil. The helical transmembrane segment at 356–382 (NVVVLVAFVALLILYIVPVVLVQGLAN) threads the bilayer. Residues 383–410 (LHQLETWFPFLKGILNMKIVSQVITGYL) lie on the Extracellular side of the membrane. The chain crosses the membrane as a helical span at residues 411–432 (PSLIFQLFLLIVPPIMLLLSSM). Residues 433-436 (QGFI) are Cytoplasmic-facing. A helical membrane pass occupies residues 437–463 (SHSQIEKSACIKLLIFTVWNSFFANVL). The Extracellular segment spans residues 464 to 489 (SGSALYRVNVFLEPKTIPRVLAAAVP). The chain crosses the membrane as a helical span at residues 490–512 (AQASFFVSYVVTSGWTGLSSEIL). Over 513–540 (RLVPLLWSFITKLFGKEDDKEFEVPSTP) the chain is Cytoplasmic. Residues 541–561 (FCQEIPRILFFGLLGITYFFL) form a helical membrane-spanning segment. Position 562 (Ser562) is a topological domain, extracellular. The chain crosses the membrane as a helical span at residues 563–586 (PLILPFLLVYYCLGYIIYRNQLLN). Topologically, residues 587-598 (VYAAKYETGGKF) are cytoplasmic. A helical transmembrane segment spans residues 599-623 (WPIVHSYTIFSLVLMHIIAVGLFGL). The Extracellular portion of the chain corresponds to 624–626 (KEL). Residues 627-655 (PVASSLTIPLPVLTVLFSIYCQRRFLPNF) form a helical membrane-spanning segment. The Cytoplasmic portion of the chain corresponds to 656–703 (KSYPTQCLVNKDKADEREQNMSEFYSELVVAYRDPALSASQDSRDISP).

This sequence belongs to the CSC1 (TC 1.A.17) family. As to quaternary structure, homodimer.

Its subcellular location is the membrane. In terms of biological role, acts as an osmosensitive calcium-permeable cation channel. The polypeptide is Hyperosmolality-gated Ca2+ permeable channel 2.3 (Arabidopsis thaliana (Mouse-ear cress)).